The sequence spans 127 residues: DNA-directed RNA polymerase subunit omega (127 aa).

The protein belongs to the RNA polymerase subunit omega family. The RNAP catalytic core consists of 2 alpha, 1 beta, 1 beta' and 1 omega subunit. When a sigma factor is associated with the core the holoenzyme is formed, which can initiate transcription.

The catalysed reaction is RNA(n) + a ribonucleoside 5'-triphosphate = RNA(n+1) + diphosphate. Functionally, promotes RNA polymerase assembly. Latches the N- and C-terminal regions of the beta' subunit thereby facilitating its interaction with the beta and alpha subunits. This chain is DNA-directed RNA polymerase subunit omega, found in Rickettsia typhi (strain ATCC VR-144 / Wilmington).